An 869-amino-acid chain; its full sequence is H(+)/Cl(-) exchange transporter 6 (869 aa).

Topologically, residues Met1–Lys80 are cytoplasmic. The next 2 helical transmembrane spans lie at Trp81–Val113 and Leu128–Ile150. Positions Gly156–Pro160 match the Selectivity filter part_1 motif. Ser157 provides a ligand contact to chloride. Positions Ile159 to Leu166 form an intramembrane region, helical. 2 helical membrane passes run Arg176–Gly194 and Glu200–Phe217. A Selectivity filter part_2 motif is present at residues Gly198–Pro202. 2 intramembrane regions (helical) span residues Phe241–Ala253 and Pro257–Leu265. Transmembrane regions (helical) follow at residues Thr277 to Phe294, Gly335 to Arg364, and Lys371 to Ala392. N-linked (GlcNAc...) asparagine glycosylation is found at Asn410, Asn422, and Asn432. Helical transmembrane passes span Pro462 to Gly481 and Gly487 to Ile511. The Selectivity filter part_3 signature appears at Gly487–Pro491. Phe489 contacts chloride. The helical intramembrane region spans Gly519–Val533. The note=Loop between two helices intramembrane region spans Val534–Met536. An intramembrane region (helical) is located at residues Thr537–Thr548. Positions Asn549–Thr552 form an intramembrane region, note=Loop between two helices. A helical transmembrane segment spans residues Tyr553–Phe571. Over Asn572–Ile869 the chain is Cytoplasmic. Chloride is bound at residue Tyr576. Positions Met605–Ser662 constitute a CBS 1 domain. His630 to Ala632 serves as a coordination point for ATP. The disordered stretch occupies residues Ala668–Arg687. Residues Ser677–Leu686 are compositionally biased toward polar residues. Ser773 carries the post-translational modification Phosphoserine. A CBS 2 domain is found at Met807–Thr868. Position 849–852 (Thr849–Asn852) interacts with ATP.

This sequence belongs to the chloride channel (TC 2.A.49) family. ClC-6/CLCN6 subfamily. N-glycosylated on several asparagine residues.

The protein localises to the late endosome membrane. The enzyme catalyses 2 chloride(in) + H(+)(out) = 2 chloride(out) + H(+)(in). Voltage-gated channel mediating the exchange of chloride ions against protons. Functions as antiporter and contributes to the acidification of the late endosome lumen. The CLC channel family contains both chloride channels and proton-coupled anion transporters that exchange chloride or another anion for protons. The presence of conserved gating glutamate residues is typical for family members that function as antiporters. The polypeptide is H(+)/Cl(-) exchange transporter 6 (CLCN6) (Oryctolagus cuniculus (Rabbit)).